The following is a 124-amino-acid chain: Early nodulin-5 (124 aa).

The N-terminal stretch at 1–12 (IIFSMWLLFSFS) is a signal peptide.

Its function is as follows. Involved in the infection process during the plant-rhizobium interaction. The chain is Early nodulin-5 (ENOD5) from Vicia sativa (Spring vetch).